Reading from the N-terminus, the 200-residue chain is Large ribosomal subunit protein uL4 (200 aa).

The interval glycine 38 to arginine 68 is disordered. Residues glycine 54 to glycine 65 are compositionally biased toward basic residues.

The protein belongs to the universal ribosomal protein uL4 family. As to quaternary structure, part of the 50S ribosomal subunit.

One of the primary rRNA binding proteins, this protein initially binds near the 5'-end of the 23S rRNA. It is important during the early stages of 50S assembly. It makes multiple contacts with different domains of the 23S rRNA in the assembled 50S subunit and ribosome. Functionally, forms part of the polypeptide exit tunnel. This is Large ribosomal subunit protein uL4 from Pseudomonas savastanoi pv. phaseolicola (strain 1448A / Race 6) (Pseudomonas syringae pv. phaseolicola (strain 1448A / Race 6)).